The sequence spans 86 residues: Kappa-theraphotoxin-Cg1a 3 (86 aa).

An N-terminal signal peptide occupies residues 1–21 (MKVSVLITLAVLGVMFVWASA). The propeptide occupies 22–50 (AELEERGSDQRDSPAWLKSMERIFRSEER). Intrachain disulfides connect C52–C66, C59–C71, and C65–C78. F84 carries the phenylalanine amide modification.

Belongs to the neurotoxin 10 (Hwtx-1) family. 28 (Jztx-11) subfamily. Expressed by the venom gland.

The protein resides in the secreted. Its function is as follows. This toxin acts as a voltage-dependent gating-modifier. It inhibits the sodium conductance (IC(50)=124 nM) and slows the fast inactivation (EC(50)=1180 nM) of Nav1.5/SCN5A. It significantly shifts the activation to more depolarized voltages and decreases the deactivation of Nav1.5 currents upon extreme depolarization, but only slightly affects voltage-dependence of steady-state inactivation. In addition, this toxin causes an approximately five-fold decrease in the rate of recovery from inactivation and an approximately 1.9-fold reduction in the closed-state inactivation rate. This toxin integrates the functions of site 3 toxins (alpha-scorpion toxins) with site 4 toxins (beta-scorpion and spider toxins) by targeting multiple sites on Nav1.5. Also shows inhibition of voltage-gated potassium channels (5 uM completely inhibits Kv2.1/KCNB1, whereas 5 uM moderately inhibits Kv4.2/KCND2 Kv4.1/KCND1 channels). The protein is Kappa-theraphotoxin-Cg1a 3 of Chilobrachys guangxiensis (Chinese earth tiger tarantula).